A 210-amino-acid chain; its full sequence is MKGKFIVIEGLEGAGKSSAHQSVVRVLHELGIKDVVFTREPGGTPLAEKLRHLIKHETEEPVTDKAELLMLYAARIQLVENVIKPALMQGKWVVGDRHDMSSQAYQGGGRQLDPHFMLTLKETVLGDFEPDLTIYLDIDPIVGLARARGRGELDRIEQMDLDFFRRTRARYLALVKDNPKAVMINAEQSIELVQADIERAVKNWWKSNEK.

10–17 (GLEGAGKS) contacts ATP.

It belongs to the thymidylate kinase family.

It catalyses the reaction dTMP + ATP = dTDP + ADP. Functionally, phosphorylation of dTMP to form dTDP in both de novo and salvage pathways of dTTP synthesis. The protein is Thymidylate kinase of Haemophilus influenzae (strain PittGG).